The sequence spans 87 residues: Selenoprotein W (87 aa).

A cross-link (cysteinyl-selenocysteine (Cys-Sec); redox-active) is located at residues 10-13; sequence CGAU. Sec13 is a non-standard amino acid (selenocysteine). Cys37 carries the post-translational modification S-glutathionyl cysteine.

It belongs to the SelWTH family. Selenoprotein W subfamily. As to quaternary structure, interacts with DPYSL2, PRDX1, YWHAB, YWHAG, HSP70 and HSP90. As to expression, highest levels detected in skeletal muscle, tongue, heart and brain. Expressed at significantly higher levels in female skeletal muscle than in male and at slightly higher levels in female cardiac muscle than in male (at protein level). Also detected at low levels in liver.

The protein localises to the cytoplasm. In terms of biological role, plays a role as a glutathione (GSH)-dependent antioxidant. May be involved in a redox-related process. May play a role in the myopathies of selenium deficiency. The protein is Selenoprotein W of Macaca mulatta (Rhesus macaque).